Consider the following 434-residue polypeptide: Serine--tRNA ligase (434 aa).

239–241 (TAE) contacts L-serine. 270 to 272 (RSE) is an ATP binding site. Glu-293 is an L-serine binding site. 357 to 360 (EISS) lines the ATP pocket. Ser-393 provides a ligand contact to L-serine.

Belongs to the class-II aminoacyl-tRNA synthetase family. Type-1 seryl-tRNA synthetase subfamily. In terms of assembly, homodimer. The tRNA molecule binds across the dimer.

It is found in the cytoplasm. The catalysed reaction is tRNA(Ser) + L-serine + ATP = L-seryl-tRNA(Ser) + AMP + diphosphate + H(+). It catalyses the reaction tRNA(Sec) + L-serine + ATP = L-seryl-tRNA(Sec) + AMP + diphosphate + H(+). The protein operates within aminoacyl-tRNA biosynthesis; selenocysteinyl-tRNA(Sec) biosynthesis; L-seryl-tRNA(Sec) from L-serine and tRNA(Sec): step 1/1. Functionally, catalyzes the attachment of serine to tRNA(Ser). Is also able to aminoacylate tRNA(Sec) with serine, to form the misacylated tRNA L-seryl-tRNA(Sec), which will be further converted into selenocysteinyl-tRNA(Sec). The chain is Serine--tRNA ligase from Mesorhizobium japonicum (strain LMG 29417 / CECT 9101 / MAFF 303099) (Mesorhizobium loti (strain MAFF 303099)).